Consider the following 289-residue polypeptide: Protease HtpX homolog (289 aa).

The next 2 helical transmembrane spans lie at 10–30 and 34–54; these read TAAL…VIGS and STTP…YGYW. His-138 is a binding site for Zn(2+). Glu-139 is an active-site residue. His-142 contributes to the Zn(2+) binding site. Helical transmembrane passes span 153 to 173 and 182 to 202; these read VAAA…IFGG and LAVM…QSAI. Glu-207 contacts Zn(2+).

It belongs to the peptidase M48B family. Zn(2+) serves as cofactor.

It is found in the cell membrane. The polypeptide is Protease HtpX homolog (Arthrobacter sp. (strain FB24)).